We begin with the raw amino-acid sequence, 423 residues long: Phospholipase A1-IIalpha (423 aa).

The stretch at 194 to 217 forms a coiled coil; that stretch reads SAQEQVQGELKRLLELYKDEEISI. The active-site Acyl-ester intermediate is Ser-223. Active-site charge relay system residues include Ser-223, Asp-290, and His-327. Residues 399–423 are disordered; sequence HDDDVDADDNDDSSTSNQLQELNTD. Residues 401–410 show a composition bias toward acidic residues; that stretch reads DDVDADDNDD. The span at 411–423 shows a compositional bias: polar residues; sequence SSTSNQLQELNTD.

The protein belongs to the AB hydrolase superfamily. Lipase family.

It is found in the cytoplasm. In terms of biological role, acylhydrolase that catalyzes the hydrolysis of phospholipids at the sn-1 position. This chain is Phospholipase A1-IIalpha, found in Arabidopsis thaliana (Mouse-ear cress).